A 353-amino-acid polypeptide reads, in one-letter code: Lysophosphatidic acid receptor 3 (353 aa).

At 1 to 31 the chain is on the extracellular side; the sequence is MNECHYDKHMDFFYNRSNTDTVDDWTGTKLV. A glycan (N-linked (GlcNAc...) asparagine) is linked at N15. The helical transmembrane segment at 32-52 threads the bilayer; it reads IVLCVGTFFCLFIFFSNSLVI. Topologically, residues 53-67 are cytoplasmic; it reads AAVIKNRKFHFPFYY. A helical membrane pass occupies residues 68–88; the sequence is LLANLAAADFFAGIAYVFLMF. Residues 89–101 are Extracellular-facing; it reads NTGPVSKTLTVNR. Residues 102 to 124 traverse the membrane as a helical segment; it reads WFLRQGLLDSSLTASLTNLLVIA. At 125 to 146 the chain is on the cytoplasmic side; it reads VERHMSIMRMRVHSNLTKKRVT. A helical membrane pass occupies residues 147–167; sequence LLILLVWAIAIFMGAVPTLGW. Over 168–186 the chain is Extracellular; sequence NCLCNISACSSLAPIYSRS. The N-linked (GlcNAc...) asparagine glycan is linked to N172. Residues 187–207 traverse the membrane as a helical segment; it reads YLVFWTVSNLMAFLIMVVVYL. Topologically, residues 208–240 are cytoplasmic; it reads RIYVYVKRKTNVLSPHTSGSISRRRTPMKLMKT. The chain crosses the membrane as a helical span at residues 241–261; it reads VMTVLGAFVVCWTPGLVVLLL. Residues 262–276 lie on the Extracellular side of the membrane; sequence DGLNCRQCGVQHVKR. Residues 277-297 form a helical membrane-spanning segment; the sequence is WFLLLALLNSVVNPIIYSYKD. Over 298–353 the chain is Cytoplasmic; that stretch reads EDMYGTMKKMICCFSQENPERRPSRIPSTVLSRSDTGSQYIEDSISQGAVCNKSTS. C309 carries S-palmitoyl cysteine lipidation.

The protein belongs to the G-protein coupled receptor 1 family. As to expression, most abundantly expressed in prostate, testes, pancreas, and heart, with moderate levels in lung and ovary. No detectable expression in brain, placenta, liver, skeletal muscle, kidney, spleen, thymus, small intestine, colon, or peripheral blood leukocytes.

Its subcellular location is the cell membrane. In terms of biological role, receptor for lysophosphatidic acid (LPA), a mediator of diverse cellular activities. May play a role in the development of ovarian cancer. Seems to be coupled to the G(i)/G(o) and G(q) families of heteromeric G proteins. This Homo sapiens (Human) protein is Lysophosphatidic acid receptor 3 (LPAR3).